The sequence spans 143 residues: FAD synthase (143 aa).

Residues 10-11, 15-18, and Asp-93 contribute to the ATP site; these read TF and HPGH.

It belongs to the archaeal FAD synthase family. Homodimer. A divalent metal cation serves as cofactor.

The enzyme catalyses FMN + ATP + H(+) = FAD + diphosphate. It functions in the pathway cofactor biosynthesis; FAD biosynthesis; FAD from FMN: step 1/1. In terms of biological role, catalyzes the transfer of the AMP portion of ATP to flavin mononucleotide (FMN) to produce flavin adenine dinucleotide (FAD) coenzyme. The polypeptide is FAD synthase (Haloterrigena turkmenica (strain ATCC 51198 / DSM 5511 / JCM 9101 / NCIMB 13204 / VKM B-1734 / 4k) (Halococcus turkmenicus)).